The sequence spans 82 residues: Small ribosomal subunit protein bS16c (82 aa).

The protein belongs to the bacterial ribosomal protein bS16 family.

It localises to the plastid. It is found in the chloroplast. The protein is Small ribosomal subunit protein bS16c of Pyropia yezoensis (Susabi-nori).